We begin with the raw amino-acid sequence, 192 residues long: NAD(P)H-quinone oxidoreductase subunit J, organellar chromatophore (192 aa).

The protein belongs to the complex I 30 kDa subunit family. In terms of assembly, NDH is composed of at least 16 different subunits, 5 of which are encoded in the nucleus.

Its subcellular location is the plastid. It localises to the organellar chromatophore thylakoid membrane. It catalyses the reaction a quinone + NADH + H(+) = a quinol + NAD(+). NDH-1 shuttles electrons from NADH, via FMN and iron-sulfur (Fe-S) centers, to quinones in the respiratory chain. Couples the redox reaction to proton translocation (for every two electrons transferred, four hydrogen ions are translocated across the cytoplasmic membrane), and thus conserves the redox energy in a proton gradient. The protein is NAD(P)H-quinone oxidoreductase subunit J, organellar chromatophore of Paulinella chromatophora.